An 83-amino-acid polypeptide reads, in one-letter code: Kunitz serine protease inhibitor Pr-mulgin 1 (83 aa).

The first 24 residues, 1-24 (MSSGGLLLLLGLLTLWEVLTPVSS), serve as a signal peptide directing secretion. The region spanning 31–81 (CELPADPGPCNGLFQAFYYNPVQRKCLKFRYGGCKGNPNTFKTIEECKRTC) is the BPTI/Kunitz inhibitor domain. Cystine bridges form between cysteine 31-cysteine 81, cysteine 40-cysteine 64, and cysteine 56-cysteine 77.

It belongs to the venom Kunitz-type family. As to expression, expressed by the venom gland.

Its subcellular location is the secreted. Specifically inhibits MMP2 activity (EC(50)=100 nM and Ki=60 nM). This is Kunitz serine protease inhibitor Pr-mulgin 1 from Pseudechis rossignolii (Papuan pigmy mulga snake).